We begin with the raw amino-acid sequence, 291 residues long: N-acetylmannosamine kinase (291 aa).

ATP-binding positions include 5 to 12 (AIDIGGTK) and 132 to 139 (GVGGGVVC). His-156, Cys-166, Cys-168, and Cys-173 together coordinate Zn(2+).

The protein belongs to the ROK (NagC/XylR) family. NanK subfamily. In terms of assembly, homodimer.

The enzyme catalyses an N-acyl-D-mannosamine + ATP = an N-acyl-D-mannosamine 6-phosphate + ADP + H(+). It functions in the pathway amino-sugar metabolism; N-acetylneuraminate degradation; D-fructose 6-phosphate from N-acetylneuraminate: step 2/5. Catalyzes the phosphorylation of N-acetylmannosamine (ManNAc) to ManNAc-6-P. In Salmonella gallinarum (strain 287/91 / NCTC 13346), this protein is N-acetylmannosamine kinase.